We begin with the raw amino-acid sequence, 441 residues long: Diuretic hormone receptor (441 aa).

3 N-linked (GlcNAc...) asparagine glycosylation sites follow: Asn99, Asn107, and Asn112. Residues 135–158 (FVFFVGFCLSLVAIAVAIWIFLYF) form a helical membrane-spanning segment. Residues 159 to 166 (KDLRCLRN) lie on the Cytoplasmic side of the membrane. A helical membrane pass occupies residues 167–187 (TIHTNLMATYICNDATWIISA). Over 188–194 (VVQEYVE) the chain is Extracellular. Residues 195-224 (NGGLCSVLAVLMHYFYLTNFFWMFVEGLYL) form a helical membrane-spanning segment. Over 225-238 (FLLVVATFTGEKVK) the chain is Cytoplasmic. A helical transmembrane segment spans residues 239 to 260 (LQIYIIIGWGIPGVIVVTWAII). At 261–291 (KHLGKTAPDNAGESHPMVLLIKHCPWMAEDY) the chain is on the extracellular side. Residues 292–315 (FDWIHQAPVITVLAVNLVFLFSIM) traverse the membrane as a helical segment. The Cytoplasmic segment spans residues 316–338 (WVLITKLQSANTAETQQYRKATK). Residues 339–357 (ALLVLFPLLGITYILMMQG) traverse the membrane as a helical segment. At 358 to 371 (PMDGVAGHVFRNAQ) the chain is on the extracellular side. The helical transmembrane segment at 372 to 391 (ALLLSLQGFTVALFYCFLNT) threads the bilayer. The Cytoplasmic segment spans residues 392–441 (EVQNTLRHRMSRWRETRTVGGGRRYTLSGHSKDWSPRSRTESIRCLQHRS).

It belongs to the G-protein coupled receptor 2 family. Expressed in Malpighian tubules.

The protein localises to the cell membrane. In terms of biological role, receptor for the insect diurectic hormone. The activity of this receptor is mediated by G proteins which activate adenylyl cyclase. The protein is Diuretic hormone receptor of Acheta domesticus (House cricket).